The sequence spans 504 residues: Cytochrome P450 2K4 (504 aa).

Position 447 (Cys447) interacts with heme.

It belongs to the cytochrome P450 family. It depends on heme as a cofactor.

Its subcellular location is the endoplasmic reticulum membrane. It localises to the microsome membrane. It carries out the reaction an organic molecule + reduced [NADPH--hemoprotein reductase] + O2 = an alcohol + oxidized [NADPH--hemoprotein reductase] + H2O + H(+). The protein is Cytochrome P450 2K4 (cyp2k4) of Oncorhynchus mykiss (Rainbow trout).